The following is a 317-amino-acid chain: MLVVLFTVALLALSSAQGPREELQNQIQIPNQRPPPSGSQPRPPVNGSQQGPPPPGGPQPRPPQGPPPPGGPQPRPPQGPPPPGGPQPRPPQGPPPPGGPQPRPPQGPPPPGGPQPRPPQGPPPPGGPQPRPPQGPPPPGGPQQRPPQGPPPPGGPQPRPPQGPPPPAGPQPRPPQGPPPPAGPHLRPTQGPPPTGGPQQRYPQSPPPPGGPQPRPPQGPPPPGGPHPRPTQGPPPTGPQPRPTQGPPPTGGPQQRPPQGPPPPGGPQPRPPQGPPPPTGPQPRPTQGPHPTGGPQQTPPLAGNPQGPPQGRPQGPQ.

The N-terminal stretch at 1-16 is a signal peptide; the sequence is MLVVLFTVALLALSSA. The segment at 15-317 is disordered; it reads SAQGPREELQ…PPQGRPQGPQ (303 aa). Over residues 32–44 the composition is skewed to pro residues; it reads QRPPPSGSQPRPP. Asn46 is a glycosylation site (N-linked (GlcNAc...) asparagine). 2 stretches are compositionally biased toward pro residues: residues 51–183 and 204–288; these read GPPP…PPAG and QSPP…PTQG. Over residues 289-305 the composition is skewed to low complexity; that stretch reads PHPTGGPQQTPPLAGNP. A compositionally biased stretch (pro residues) spans 306 to 317; that stretch reads QGPPQGRPQGPQ.

It localises to the secreted. The chain is Proline-rich protein 2 (Prp2) from Mus musculus (Mouse).